The chain runs to 879 residues: Leucine--tRNA ligase (879 aa).

A 'HIGH' region motif is present at residues 45 to 55 (PYPSGALHMGH). The short motif at 637-641 (KMSKS) is the 'KMSKS' region element. Lys-640 provides a ligand contact to ATP.

Belongs to the class-I aminoacyl-tRNA synthetase family.

Its subcellular location is the cytoplasm. The catalysed reaction is tRNA(Leu) + L-leucine + ATP = L-leucyl-tRNA(Leu) + AMP + diphosphate. The polypeptide is Leucine--tRNA ligase (Xylella fastidiosa (strain M12)).